A 487-amino-acid chain; its full sequence is N-succinylglutamate 5-semialdehyde dehydrogenase (487 aa).

221 to 226 (GSSRTG) provides a ligand contact to NAD(+). Residues Glu-244 and Cys-278 contribute to the active site.

Belongs to the aldehyde dehydrogenase family. AstD subfamily.

The enzyme catalyses N-succinyl-L-glutamate 5-semialdehyde + NAD(+) + H2O = N-succinyl-L-glutamate + NADH + 2 H(+). It participates in amino-acid degradation; L-arginine degradation via AST pathway; L-glutamate and succinate from L-arginine: step 4/5. Functionally, catalyzes the NAD-dependent reduction of succinylglutamate semialdehyde into succinylglutamate. In Pseudomonas putida (strain ATCC 700007 / DSM 6899 / JCM 31910 / BCRC 17059 / LMG 24140 / F1), this protein is N-succinylglutamate 5-semialdehyde dehydrogenase.